Reading from the N-terminus, the 83-residue chain is MKILIFIIASFMLIGVECKEGYPMGRDGCKISCVINNNFCKVECQAKWRQSDGYCYFWGLSCYCTNLPEDAQVWDSSTNKCGG.

Residues 1 to 18 (MKILIFIIASFMLIGVEC) form the signal peptide. The region spanning 19–82 (KEGYPMGRDG…VWDSSTNKCG (64 aa)) is the LCN-type CS-alpha/beta domain. 4 cysteine pairs are disulfide-bonded: cysteine 29-cysteine 81, cysteine 33-cysteine 55, cysteine 40-cysteine 62, and cysteine 44-cysteine 64. A propeptide is located at residue glycine 83.

Post-translationally, contains 4 disulfide bonds. As to expression, expressed by the venom gland.

It localises to the secreted. In terms of biological role, beta toxins bind voltage-independently at site-4 of sodium channels (Nav) and shift the voltage of activation toward more negative potentials thereby affecting sodium channel activation and promoting spontaneous and repetitive firing. This toxin is lethal to insects (A.domestica). It is not toxic to mice and does not affect mammal F11 sodium channels. The chain is Putative beta-neurotoxin RjAa12f from Rhopalurus junceus (Caribbean blue scorpion).